A 441-amino-acid polypeptide reads, in one-letter code: BTB/POZ domain-containing protein At3g05675 (441 aa).

Residues 20 to 98 (SDIVVRLRNE…LYVVSDDVHE (79 aa)) enclose the BTB domain.

The protein operates within protein modification; protein ubiquitination. In terms of biological role, may act as a substrate-specific adapter of an E3 ubiquitin-protein ligase complex (CUL3-RBX1-BTB) which mediates the ubiquitination and subsequent proteasomal degradation of target proteins. In Arabidopsis thaliana (Mouse-ear cress), this protein is BTB/POZ domain-containing protein At3g05675.